The chain runs to 280 residues: Tryptophan synthase alpha chain (280 aa).

Residues Glu-50 and Asp-61 each act as proton acceptor in the active site.

It belongs to the TrpA family. In terms of assembly, tetramer of two alpha and two beta chains.

The catalysed reaction is (1S,2R)-1-C-(indol-3-yl)glycerol 3-phosphate + L-serine = D-glyceraldehyde 3-phosphate + L-tryptophan + H2O. Its pathway is amino-acid biosynthesis; L-tryptophan biosynthesis; L-tryptophan from chorismate: step 5/5. Functionally, the alpha subunit is responsible for the aldol cleavage of indoleglycerol phosphate to indole and glyceraldehyde 3-phosphate. The chain is Tryptophan synthase alpha chain from Methylorubrum extorquens (strain PA1) (Methylobacterium extorquens).